The chain runs to 172 residues: Adenine phosphoribosyltransferase (172 aa).

It belongs to the purine/pyrimidine phosphoribosyltransferase family. Homodimer.

The protein resides in the cytoplasm. The catalysed reaction is AMP + diphosphate = 5-phospho-alpha-D-ribose 1-diphosphate + adenine. Its pathway is purine metabolism; AMP biosynthesis via salvage pathway; AMP from adenine: step 1/1. Functionally, catalyzes a salvage reaction resulting in the formation of AMP, that is energically less costly than de novo synthesis. The sequence is that of Adenine phosphoribosyltransferase from Parasynechococcus marenigrum (strain WH8102).